The primary structure comprises 185 residues: MRATLAIALTLATTSPAFAAGGGWNLGNTDFVVILAFLLFIGILLAAKVPSLIGKQLDNRADSIKSELEEARALREEAQTLLASYERKQQDVQAQAERIVANARDEAAAAAEQAKADLAASIARRLTAAEEQIASAEASAVKEVRDRAITIAVEVADQVISKQMTAADANKLIDAAIQDVEAKLH.

The chain crosses the membrane as a helical span at residues threonine 4 to tryptophan 24.

Belongs to the ATPase B chain family. In terms of assembly, F-type ATPases have 2 components, F(1) - the catalytic core - and F(0) - the membrane proton channel. F(1) has five subunits: alpha(3), beta(3), gamma(1), delta(1), epsilon(1). F(0) has three main subunits: a(1), b(2) and c(10-14). The alpha and beta chains form an alternating ring which encloses part of the gamma chain. F(1) is attached to F(0) by a central stalk formed by the gamma and epsilon chains, while a peripheral stalk is formed by the delta and b chains.

The protein resides in the cell inner membrane. In terms of biological role, f(1)F(0) ATP synthase produces ATP from ADP in the presence of a proton or sodium gradient. F-type ATPases consist of two structural domains, F(1) containing the extramembraneous catalytic core and F(0) containing the membrane proton channel, linked together by a central stalk and a peripheral stalk. During catalysis, ATP synthesis in the catalytic domain of F(1) is coupled via a rotary mechanism of the central stalk subunits to proton translocation. Component of the F(0) channel, it forms part of the peripheral stalk, linking F(1) to F(0). This Ruegeria sp. (strain TM1040) (Silicibacter sp.) protein is ATP synthase subunit b 1.